We begin with the raw amino-acid sequence, 305 residues long: Uridylate cyclase (305 aa).

The Mn(2+) site is built by Asp-58 and Asp-102.

It belongs to the adenylyl cyclase class-4/guanylyl cyclase family. Pyrimidine cyclase subfamily. Homodimer. Mn(2+) is required as a cofactor.

The protein resides in the cytoplasm. It carries out the reaction GTP = 3',5'-cyclic GMP + diphosphate. The enzyme catalyses UTP = 3',5'-cyclic UMP + diphosphate. In terms of biological role, pycsar (pyrimidine cyclase system for antiphage resistance) provides immunity against bacteriophage. The pyrimidine cyclase (PycC) synthesizes cyclic nucleotides in response to infection; these serve as specific second messenger signals. The signals activate the adjacent effector, leading to bacterial cell death and abortive phage infection. A clade D Pycsar system. Its function is as follows. The pyrimidine cyclase gene of a two-gene Pycsar system, generates cyclic UMP (cUMP) from UTP as well as cGMP from GTP to a lesser extent, has little to no activity on ATP or CTP. Expression of this and adjacent effector MePycTM (AC A0A1C5G2D0) probably confers resistance to bacteriophage. The genes are probably only expressed in response to bacteriophage infection. This chain is Uridylate cyclase, found in Micromonospora echinofusca.